Reading from the N-terminus, the 295-residue chain is Proline-rich protein 32 (295 aa).

2 disordered regions span residues 10–48 (GHAP…GHPG) and 101–120 (ATGE…SGQD).

The polypeptide is Proline-rich protein 32 (PRR32) (Bos taurus (Bovine)).